We begin with the raw amino-acid sequence, 963 residues long: Phosphofurin acidic cluster sorting protein 1 (963 aa).

The segment covering 1-22 has biased composition (gly residues); sequence MAERGGAGGGPGGAGGGSGQRG. Disordered regions lie at residues 1-72 and 78-97; these read MAER…SSST and VAVA…RTPA. A2 bears the N-acetylalanine mark. S28 bears the Phosphoserine mark. A Phosphothreonine modification is found at T46. Positions 53–72 are enriched in low complexity; sequence ATSSSSSTSAAAASSSSSST. Positions 168-175 are involved in binding to AP-1; the sequence is ETELQLTF. Position 251 is a phosphotyrosine (Y251). Residues 262-273 show a composition bias toward basic and acidic residues; the sequence is GIKSKLSDRSPD. Disordered regions lie at residues 262–299 and 377–428; these read GIKS…LHGQ and NPSD…GKDT. Residues 276–293 are compositionally biased toward acidic residues; that stretch reads NYSEEEEESFSSEQEGSD. A coiled-coil region spans residues 353–377; it reads HVSREQIREVEEDLDELYDSLEMYN. 2 positions are modified to phosphoserine: S379 and S381. Polar residues predominate over residues 406–428; the sequence is MSQSSSQTEIGSLNSKGSLGKDT. 2 positions are modified to phosphoserine: S430 and S495. Disordered stretches follow at residues 476–542 and 760–804; these read PEKV…HSTQ and SPST…SMSS. Over residues 483–496 the composition is skewed to polar residues; sequence MKSSKTDLQGSASP. T504 is modified (phosphothreonine). Phosphoserine occurs at positions 519, 528, 529, 531, and 534. Over residues 770 to 804 the composition is skewed to low complexity; the sequence is SPVVSLTVPSTSPPSSSGLSRDATATPPSSPSMSS.

The protein belongs to the PACS family. In terms of assembly, associates with AP-1 and AP-3 but not with AP-2 complexes. Interacts with FURIN. Forms a ternary complex with FURIN and AP-1. Interacts with NPHP1; the interaction is dependent of NPHP1 phosphorylation by CK2. Interacts with PKD2 (via acidic region). Interacts with SORL1. Interacts with WDR37. (Microbial infection) Interacts with HIV-1 Nef. As to quaternary structure, (Microbial infection) Interacts with Epstein-barr virus protein BBLF1.

The protein resides in the golgi apparatus. The protein localises to the trans-Golgi network. In terms of biological role, coat protein that is involved in the localization of trans-Golgi network (TGN) membrane proteins that contain acidic cluster sorting motifs. Controls the endosome-to-Golgi trafficking of furin and mannose-6-phosphate receptor by connecting the acidic-cluster-containing cytoplasmic domain of these molecules with the adapter-protein complex-1 (AP-1) of endosomal clathrin-coated membrane pits. Involved in HIV-1 nef-mediated removal of MHC-I from the cell surface to the TGN. Required for normal ER Ca2+ handling in lymphocytes. Together with WDR37, it plays an essential role in lymphocyte development, quiescence and survival. Required for stabilizing peripheral lymphocyte populations. The protein is Phosphofurin acidic cluster sorting protein 1 (PACS1) of Homo sapiens (Human).